The chain runs to 243 residues: Eukaryotic translation initiation factor 4E-2 (243 aa).

It belongs to the eukaryotic initiation factor 4E family. As to quaternary structure, eIF4F is a multi-subunit complex, the composition of which varies with external and internal environmental conditions. It is composed of at least eIF4A, eIF4E and eIF4G. eIF4E is also known to interact with other partners.

Its function is as follows. Recognizes and binds the 7-methylguanosine-containing mRNA cap during an early step in the initiation of protein synthesis and facilitates ribosome binding by inducing the unwinding of the mRNAs secondary structures. The polypeptide is Eukaryotic translation initiation factor 4E-2 (tif452) (Schizosaccharomyces pombe (strain 972 / ATCC 24843) (Fission yeast)).